A 469-amino-acid polypeptide reads, in one-letter code: MSRLVVVSNRIAAIEGKKESAGGLAVGIMDSLKDQGGLWFGWNGKISEEDEPLEKNQQDNITFAAFSLKQSEYDQYYLNFSNTVIWPAFHYRLDLVQYQREDYDGYCRVNEMLAGRLKPLVNEDDILWIHDYHLLPFAAACRKLGMKNRIGFFLHIPFPTSEIFNALPPRKELLEKLCEYDLVGFQAESDRQAFIENLALVTTVEDLDDDRIKAYNKLVTARVYPIGVEPESIRELAEGPLPPKLAHLRDKMNGQLIISVDRLDYSKGLPERFQAYETLLENYPQHRGNIRYFQIAPTSRGDVQAYQDIRHELETEAGRINGHFSTLEWTPLFYLNQHYERSLLMKIFRHCEVGLVTPLRDGMNLVAKEYVASQNPNDPGVLILSHFAGAANELTSALLVNPYDRDGVASALDKALSMPLSERKARYQEMIAVIKQNDIVHWCQSFLDDLKKIPSKAEIVGQAVSGATR.

Arg-10 provides a ligand contact to D-glucose 6-phosphate. 22–23 lines the UDP-alpha-D-glucose pocket; it reads GG. D-glucose 6-phosphate contacts are provided by Tyr-77 and Asp-131. Arg-262 and Lys-267 together coordinate UDP-alpha-D-glucose. Arg-300 contributes to the D-glucose 6-phosphate binding site. UDP-alpha-D-glucose is bound at residue 365 to 369; it reads LVAKE.

The protein belongs to the glycosyltransferase 20 family. As to quaternary structure, homotetramer.

The catalysed reaction is D-glucose 6-phosphate + UDP-alpha-D-glucose = alpha,alpha-trehalose 6-phosphate + UDP + H(+). Its pathway is glycan biosynthesis; trehalose biosynthesis. Probably involved in the osmoprotection via the biosynthesis of trehalose. Catalyzes the transfer of glucose from UDP-alpha-D-glucose (UDP-Glc) to D-glucose 6-phosphate (Glc-6-P) to form trehalose-6-phosphate. Acts with retention of the anomeric configuration of the UDP-sugar donor. The chain is Trehalose-6-phosphate synthase from Sodalis glossinidius (strain morsitans).